We begin with the raw amino-acid sequence, 499 residues long: Probable alpha-L-arabinofuranosidase B (499 aa).

Positions 1–18 (MFSRRNLVALGLAATVSA) are cleaved as a signal peptide. The interval 19 to 335 (GPCDIYEAGD…ENIVAAKYVS (317 aa)) is catalytic. Cystine bridges form between cysteine 21–cysteine 31, cysteine 81–cysteine 86, and cysteine 176–cysteine 177. A glycan (N-linked (GlcNAc...) asparagine) is linked at asparagine 83. The N-linked (GlcNAc...) asparagine glycan is linked to asparagine 202. Aspartate 219 is a substrate binding site. The Nucleophile role is filled by glutamate 221. Residues asparagine 222, asparagine 223, and glycine 296 each contribute to the substrate site. Aspartate 297 (proton donor) is an active-site residue. The ABD stretch occupies residues 336 to 499 (GSLVSGPSFT…SFEIETAFAS (164 aa)). A disulfide bridge connects residues cysteine 401 and cysteine 439. 8 residues coordinate substrate: histidine 416, asparagine 418, phenylalanine 419, aspartate 435, histidine 463, aspartate 465, leucine 468, and aspartate 488.

The protein belongs to the glycosyl hydrolase 54 family.

The protein resides in the secreted. The catalysed reaction is Hydrolysis of terminal non-reducing alpha-L-arabinofuranoside residues in alpha-L-arabinosides.. It participates in glycan metabolism; L-arabinan degradation. Its function is as follows. Alpha-L-arabinofuranosidase involved in the degradation of arabinoxylan, a major component of plant hemicellulose. Able to hydrolyze 1,5-, 1,3- and 1,2-alpha-linkages not only in L-arabinofuranosyl oligosaccharides, but also in polysaccharides containing terminal non-reducing L-arabinofuranoses in side chains, like L-arabinan, arabinogalactan and arabinoxylan. The polypeptide is Probable alpha-L-arabinofuranosidase B (abfB) (Aspergillus niger (strain ATCC MYA-4892 / CBS 513.88 / FGSC A1513)).